A 395-amino-acid polypeptide reads, in one-letter code: Elongation factor Tu (395 aa).

Residues 10 to 204 (KPHVNIGTIG…AVDEYIPTPQ (195 aa)) enclose the tr-type G domain. Residues 19 to 26 (GHVDHGKT) are G1. Position 19 to 26 (19 to 26 (GHVDHGKT)) interacts with GTP. T26 lines the Mg(2+) pocket. Positions 60–64 (GITIS) are G2. A G3 region spans residues 81-84 (DCPG). GTP contacts are provided by residues 81–85 (DCPGH) and 136–139 (NKCD). Positions 136–139 (NKCD) are G4. The G5 stretch occupies residues 174-176 (SAL).

This sequence belongs to the TRAFAC class translation factor GTPase superfamily. Classic translation factor GTPase family. EF-Tu/EF-1A subfamily. As to quaternary structure, monomer.

It localises to the cytoplasm. It carries out the reaction GTP + H2O = GDP + phosphate + H(+). GTP hydrolase that promotes the GTP-dependent binding of aminoacyl-tRNA to the A-site of ribosomes during protein biosynthesis. The chain is Elongation factor Tu from Geobacillus kaustophilus (strain HTA426).